A 76-amino-acid chain; its full sequence is Bowman-Birk type proteinase inhibitor DE-4 (76 aa).

7 disulfides stabilise this stretch: Cys15-Cys69, Cys16-Cys31, Cys19-Cys65, Cys21-Cys29, Cys39-Cys46, Cys43-Cys58, and Cys48-Cys56.

This sequence belongs to the Bowman-Birk serine protease inhibitor family.

The polypeptide is Bowman-Birk type proteinase inhibitor DE-4 (Macrotyloma axillare (Perennial horse gram)).